We begin with the raw amino-acid sequence, 398 residues long: MTVSQVRRVAVIGAGISGVVSTAHLVAAGFEVTVFERNQQTGGICINRPCYKNLTTNVSTPLMRIKLRAWPENTPDFVHHSVVNEYIRDIALSTGVDERTIYGARVEHVYKDGGKWHVNWSVLDDNGSIDGLEERRLISTFDAVVVASGHYHSPHIPDIPGLSEVKKRWPSRVIHSKRYRTPEVYRDENVLMIGGGVSSMDISRDLGPFAKMIFQSTRNGDADPPALMLPDNADANDTILVTNGTQVHNIHRDIFYIPDPTLAFVGIPYFNTTFTLFEFQAIAVTAVWSRTACLPSTTEMRREYLVKQKQTGGGRKFHSLKDKEKEYVRDLMAWINDGRNAHGLVPIEGHTAAWFEAMDKLWDEARAAMKERKEQQEKIIKRIPFSADCTSVELPHLN.

The N-terminal stretch at Met-1–Thr-22 is a signal peptide. Gly-13–Gly-18 serves as a coordination point for FAD. 4 N-linked (GlcNAc...) asparagine glycosylation sites follow: Asn-53, Asn-57, Asn-119, and Asn-126. Gly-194 to Ser-199 lines the NADP(+) pocket. N-linked (GlcNAc...) asparagine glycosylation is found at Asn-236, Asn-243, and Asn-271.

The protein belongs to the FMO family.

It functions in the pathway mycotoxin biosynthesis. Its function is as follows. Flavin-containing monooxygenase; part of the gene cluster that mediates the biosynthesis of the secondary metabolite ustiloxin B, an antimitotic tetrapeptide. First, ustA is processed by the subtilisin-like endoprotease Kex2 that is outside the ustiloxin B gene cluster, at the C-terminal side of Arg-Lys, after transfer to Golgi apparatus through the endoplasmic reticulum (ER). Cleavage by KEX2 generates 16 peptides YAIG-I to YAIG-XVI. To process the precursor peptide further, at least two peptidases are necessary to cleave the N-terminal and C-terminal sides of the Tyr-Ala-Ile-Gly core peptide which serves as backbone for the synthesis of ustiloxin B, through cyclization and modification of the tyrosine with a non-protein coding amino acid, norvaline. One of the two peptidases must be the serine peptidase ustP; and the other pepdidase is probably ustH. Macrocyclization of the core peptide derived from ustA requires the tyrosinase ustQ, as well as the homologous oxidases ustYa and ustYb, and leads to the production of the first cyclization product N-desmethylustiloxin F. For the formation of N-desmethylustiloxin F, three oxidation steps are required, hydroxylation at the benzylic position, hydroxylation at either the aromatic ring of Tyr or beta-position of Ile, and oxidative cyclization. UstQ may catalyze the oxidation of a phenol moiety, whereas the ustYa and ustYb are most likely responsible for the remaining two-step oxidations. N-desmethylustiloxin F is then methylated by ustM to yield ustiloxin F which in turn substrate of the cytochrome P450 monooxygenase ustC which catalyzes the formation of S-deoxyustiloxin H. The flavoprotein monooxygenases ustF1 and ustF2 then participate in the modification of the side chain of S-deoxyustiloxin H, leading to the synthesis of an oxime intermediate, via ustiloxin H. Finally, carboxylative dehydration performed by the cysteine desulfurase-like protein ustD yields ustiloxin B. The sequence is that of Flavin-containing monooxygenase ustF1 from Aspergillus flavus (strain ATCC 200026 / FGSC A1120 / IAM 13836 / NRRL 3357 / JCM 12722 / SRRC 167).